The sequence spans 34 residues: AENRERVMVQGEEENTKELTGIEFENGFISCMQN.

Expressed by the venom gland.

It is found in the secreted. The protein is Peptide 9797 of Tityus stigmurus (Brazilian scorpion).